Here is a 309-residue protein sequence, read N- to C-terminus: L-aminoadipate-semialdehyde dehydrogenase-phosphopantetheinyl transferase (309 aa).

CoA contacts are provided by residues Arg-47, Arg-86–Lys-91, and Asn-108–His-111. Mg(2+) contacts are provided by Asp-129 and Glu-181. A CoA-binding site is contributed by Glu-181–Lys-185. The residue at position 258 (Ser-258) is a Phosphoserine.

Belongs to the P-Pant transferase superfamily. AcpS family. Monomer. It depends on Mg(2+) as a cofactor. In terms of tissue distribution, detected in heart, skeletal muscle, placenta, testis, brain, pancreas, liver and kidney.

Its subcellular location is the cytoplasm. The protein resides in the cytosol. It catalyses the reaction apo-[ACP] + CoA = holo-[ACP] + adenosine 3',5'-bisphosphate + H(+). The enzyme catalyses apo-[ACP] + acetyl-CoA = acetyl-[ACP] + adenosine 3',5'-bisphosphate + H(+). In terms of biological role, catalyzes the post-translational modification of target proteins by phosphopantetheine. Can transfer the 4'-phosphopantetheine moiety from coenzyme A, regardless of whether the CoA is presented in the free thiol form or as an acetyl thioester, to a serine residue of a broad range of acceptors including the acyl carrier domain of FASN. This chain is L-aminoadipate-semialdehyde dehydrogenase-phosphopantetheinyl transferase (AASDHPPT), found in Homo sapiens (Human).